The chain runs to 142 residues: Ribosome-binding factor A (142 aa).

Residues 120–142 (TLGEVQSESDQPTTYETTTVNKT) form a disordered region. Residues 123-142 (EVQSESDQPTTYETTTVNKT) show a composition bias toward polar residues.

This sequence belongs to the RbfA family. Monomer. Binds 30S ribosomal subunits, but not 50S ribosomal subunits or 70S ribosomes.

Its subcellular location is the cytoplasm. In terms of biological role, one of several proteins that assist in the late maturation steps of the functional core of the 30S ribosomal subunit. Associates with free 30S ribosomal subunits (but not with 30S subunits that are part of 70S ribosomes or polysomes). Required for efficient processing of 16S rRNA. May interact with the 5'-terminal helix region of 16S rRNA. The chain is Ribosome-binding factor A from Prochlorococcus marinus (strain MIT 9313).